Reading from the N-terminus, the 249-residue chain is UPF0524 protein C3orf70 homolog B (249 aa).

Positions 174-230 are disordered; sequence GPKMGHCSSPSTSEDSGINALGGHFLESCEEESEEEDELSTDGHSSPGSLWDQDECT. Residues 201-213 show a composition bias toward acidic residues; that stretch reads SCEEESEEEDELS.

The protein belongs to the UPF0524 family.

In terms of biological role, plays a role in neuronal and neurobehavioral development. Required for normal expression of the postmitotic and mature neuron markers elavl3 and eno2 and neurobehaviors related to circadian rhythm and altered light-dark conditions. The polypeptide is UPF0524 protein C3orf70 homolog B (Danio rerio (Zebrafish)).